Reading from the N-terminus, the 98-residue chain is VQ motif-containing protein 1 (98 aa).

The VQ motif lies at phenylalanine 27 to glycine 36.

Interacts with WRKY33.

The protein localises to the nucleus. Its function is as follows. May modulate WRKY transcription factor activities. In Arabidopsis thaliana (Mouse-ear cress), this protein is VQ motif-containing protein 1.